The following is a 364-amino-acid chain: GDSL esterase/lipase 7 (364 aa).

The signal sequence occupies residues 1–19 (MKSLLICLVLLELVWLGNG). Residue Ser37 is the Nucleophile of the active site. N-linked (GlcNAc...) asparagine glycosylation is found at Asn236, Asn237, and Asn264. Active-site residues include Asp329 and His332. A glycan (N-linked (GlcNAc...) asparagine) is linked at Asn351.

Belongs to the 'GDSL' lipolytic enzyme family.

It localises to the secreted. The sequence is that of GDSL esterase/lipase 7 (GLIP7) from Arabidopsis thaliana (Mouse-ear cress).